The following is an 824-amino-acid chain: LPS-assembly protein LptD (824 aa).

Disordered regions lie at residues 1-26 and 67-117; these read MTEQ…RRVR and TQTP…PAYV. The signal sequence occupies residues 1–48; sequence MTEQRRSPHHPATRPPAPPGTSRRVRLPASALRPLVLAMAGLTVSAHA. Over residues 98 to 115 the composition is skewed to low complexity; that stretch reads NTLNLSPSSTPSNPNAPA.

This sequence belongs to the LptD family. In terms of assembly, component of the lipopolysaccharide transport and assembly complex. Interacts with LptE and LptA.

Its subcellular location is the cell outer membrane. Together with LptE, is involved in the assembly of lipopolysaccharide (LPS) at the surface of the outer membrane. This chain is LPS-assembly protein LptD, found in Cupriavidus metallidurans (strain ATCC 43123 / DSM 2839 / NBRC 102507 / CH34) (Ralstonia metallidurans).